The following is a 101-amino-acid chain: Nucleoid-associated protein Acid345_1974 (101 aa).

It belongs to the YbaB/EbfC family. Homodimer.

The protein resides in the cytoplasm. It is found in the nucleoid. Its function is as follows. Binds to DNA and alters its conformation. May be involved in regulation of gene expression, nucleoid organization and DNA protection. The protein is Nucleoid-associated protein Acid345_1974 of Koribacter versatilis (strain Ellin345).